Here is a 484-residue protein sequence, read N- to C-terminus: Glutamyl-tRNA(Gln) amidotransferase subunit A (484 aa).

Catalysis depends on charge relay system residues Lys77 and Ser152. Ser176 functions as the Acyl-ester intermediate in the catalytic mechanism.

It belongs to the amidase family. GatA subfamily. As to quaternary structure, heterotrimer of A, B and C subunits.

The enzyme catalyses L-glutamyl-tRNA(Gln) + L-glutamine + ATP + H2O = L-glutaminyl-tRNA(Gln) + L-glutamate + ADP + phosphate + H(+). In terms of biological role, allows the formation of correctly charged Gln-tRNA(Gln) through the transamidation of misacylated Glu-tRNA(Gln) in organisms which lack glutaminyl-tRNA synthetase. The reaction takes place in the presence of glutamine and ATP through an activated gamma-phospho-Glu-tRNA(Gln). The chain is Glutamyl-tRNA(Gln) amidotransferase subunit A from Lacticaseibacillus paracasei (strain ATCC 334 / BCRC 17002 / CCUG 31169 / CIP 107868 / KCTC 3260 / NRRL B-441) (Lactobacillus paracasei).